Consider the following 243-residue polypeptide: 1-(5-phosphoribosyl)-5-[(5-phosphoribosylamino)methylideneamino] imidazole-4-carboxamide isomerase (243 aa).

Asp-8 (proton acceptor) is an active-site residue. Asp-129 serves as the catalytic Proton donor.

This sequence belongs to the HisA/HisF family.

The protein resides in the cytoplasm. The enzyme catalyses 1-(5-phospho-beta-D-ribosyl)-5-[(5-phospho-beta-D-ribosylamino)methylideneamino]imidazole-4-carboxamide = 5-[(5-phospho-1-deoxy-D-ribulos-1-ylimino)methylamino]-1-(5-phospho-beta-D-ribosyl)imidazole-4-carboxamide. It functions in the pathway amino-acid biosynthesis; L-histidine biosynthesis; L-histidine from 5-phospho-alpha-D-ribose 1-diphosphate: step 4/9. This is 1-(5-phosphoribosyl)-5-[(5-phosphoribosylamino)methylideneamino] imidazole-4-carboxamide isomerase from Carboxydothermus hydrogenoformans (strain ATCC BAA-161 / DSM 6008 / Z-2901).